The sequence spans 468 residues: Ribosomal protein uS12 methylthiotransferase RimO (468 aa).

Positions proline 18–alanine 129 constitute an MTTase N-terminal domain. [4Fe-4S] cluster contacts are provided by cysteine 27, cysteine 63, cysteine 92, cysteine 167, cysteine 171, and cysteine 174. The region spanning threonine 153–alanine 382 is the Radical SAM core domain. A TRAM domain is found at alanine 385 to glycine 456.

It belongs to the methylthiotransferase family. RimO subfamily. [4Fe-4S] cluster serves as cofactor.

Its subcellular location is the cytoplasm. It catalyses the reaction L-aspartate(89)-[ribosomal protein uS12]-hydrogen + (sulfur carrier)-SH + AH2 + 2 S-adenosyl-L-methionine = 3-methylsulfanyl-L-aspartate(89)-[ribosomal protein uS12]-hydrogen + (sulfur carrier)-H + 5'-deoxyadenosine + L-methionine + A + S-adenosyl-L-homocysteine + 2 H(+). Catalyzes the methylthiolation of an aspartic acid residue of ribosomal protein uS12. The chain is Ribosomal protein uS12 methylthiotransferase RimO from Synechococcus sp. (strain WH7803).